The sequence spans 396 residues: Acetate kinase (396 aa).

Asn-8 provides a ligand contact to Mg(2+). Position 15 (Lys-15) interacts with ATP. Arg-89 is a substrate binding site. Asp-146 (proton donor/acceptor) is an active-site residue. ATP contacts are provided by residues His-206–Gly-210, Asp-281–Arg-283, and Gly-329–Asn-333. Mg(2+) is bound at residue Glu-382.

Belongs to the acetokinase family. As to quaternary structure, homodimer. It depends on Mg(2+) as a cofactor. The cofactor is Mn(2+).

It is found in the cytoplasm. It carries out the reaction acetate + ATP = acetyl phosphate + ADP. It functions in the pathway metabolic intermediate biosynthesis; acetyl-CoA biosynthesis; acetyl-CoA from acetate: step 1/2. Catalyzes the formation of acetyl phosphate from acetate and ATP. Can also catalyze the reverse reaction. The chain is Acetate kinase from Geobacillus kaustophilus (strain HTA426).